A 403-amino-acid chain; its full sequence is S-adenosylmethionine synthase (403 aa).

Histidine 16 serves as a coordination point for ATP. Aspartate 18 is a binding site for Mg(2+). Glutamate 44 provides a ligand contact to K(+). 2 residues coordinate L-methionine: glutamate 57 and glutamine 110. Residues 110–120 are flexible loop; that stretch reads QSAHIAQGVDA. ATP is bound by residues 175 to 177, aspartate 253, 259 to 260, alanine 276, and lysine 280; these read DSK and RK. Aspartate 253 is a binding site for L-methionine. An L-methionine-binding site is contributed by lysine 284.

This sequence belongs to the AdoMet synthase family. As to quaternary structure, homotetramer; dimer of dimers. Requires Mg(2+) as cofactor. K(+) is required as a cofactor.

It is found in the cytoplasm. The enzyme catalyses L-methionine + ATP + H2O = S-adenosyl-L-methionine + phosphate + diphosphate. The protein operates within amino-acid biosynthesis; S-adenosyl-L-methionine biosynthesis; S-adenosyl-L-methionine from L-methionine: step 1/1. Functionally, catalyzes the formation of S-adenosylmethionine (AdoMet) from methionine and ATP. The overall synthetic reaction is composed of two sequential steps, AdoMet formation and the subsequent tripolyphosphate hydrolysis which occurs prior to release of AdoMet from the enzyme. This chain is S-adenosylmethionine synthase, found in Erythrobacter litoralis (strain HTCC2594).